The following is a 248-amino-acid chain: Triosephosphate isomerase (248 aa).

Residue 9 to 11 (NWK) coordinates substrate. His101 functions as the Electrophile in the catalytic mechanism. The active-site Proton acceptor is Glu170. Residues Gly176, Ser208, and 229-230 (GG) contribute to the substrate site.

Belongs to the triosephosphate isomerase family. In terms of assembly, homodimer.

It is found in the cytoplasm. The enzyme catalyses D-glyceraldehyde 3-phosphate = dihydroxyacetone phosphate. It functions in the pathway carbohydrate biosynthesis; gluconeogenesis. It participates in carbohydrate degradation; glycolysis; D-glyceraldehyde 3-phosphate from glycerone phosphate: step 1/1. Functionally, involved in the gluconeogenesis. Catalyzes stereospecifically the conversion of dihydroxyacetone phosphate (DHAP) to D-glyceraldehyde-3-phosphate (G3P). This Mycoplasmopsis pulmonis (strain UAB CTIP) (Mycoplasma pulmonis) protein is Triosephosphate isomerase.